A 740-amino-acid polypeptide reads, in one-letter code: Leucine-rich repeat neuronal protein 4 (740 aa).

Residues 1–18 (MRQTLPLLLLTVLRPSWA) form the signal peptide. Topologically, residues 19–679 (DPPQEKVPLF…PCAAFTTKPS (661 aa)) are extracellular. The N-linked (GlcNAc...) asparagine glycan is linked to N42. LRR repeat units lie at residues 51-74 (LPAA…GCLP), 75-97 (RTLR…ELGH), 98-123 (LEQL…GPAG), 125-144 (HTLD…TGPA), 145-168 (LSSL…AFAC), 174-197 (LLNL…AFAG), 203-226 (LVTL…WIRD), 228-251 (PKLT…IFKM), 253-276 (PNLQ…IFQD), and 277-300 (TPHL…TLDS). Residue N176 is glycosylated (N-linked (GlcNAc...) asparagine). Residues N289, N379, and N442 are each glycosylated (N-linked (GlcNAc...) asparagine). A disordered region spans residues 389–517 (VAPSAAPATR…QAPNPSLSEG (129 aa)). 2 stretches are compositionally biased toward polar residues: residues 430–454 (APST…STTR) and 490–514 (WDRS…NPSL). The 101-residue stretch at 579–679 (IPDPPRLQGV…PCAAFTTKPS (101 aa)) folds into the Fibronectin type-III domain. Residue N622 is glycosylated (N-linked (GlcNAc...) asparagine). A helical membrane pass occupies residues 680 to 700 (FALLLSGLCAASGLLLASTVV). Residues 701-740 (LSACLCRRGQTLGLQRCDTHLVAYKNPAFDDYPLGLQTVS) lie on the Cytoplasmic side of the membrane.

Its subcellular location is the membrane. Its function is as follows. May play an important role in hippocampus-dependent long-lasting memory. This is Leucine-rich repeat neuronal protein 4 (LRRN4) from Homo sapiens (Human).